The chain runs to 350 residues: Pleckstrin (350 aa).

One can recognise a PH 1 domain in the interval 4 to 101; it reads KRIREGYLVK…WVRDIKKAIK (98 aa). Lys64 carries the post-translational modification N6-acetyllysine. Phosphoserine occurs at positions 113 and 117. The 86-residue stretch at 136–221 folds into the DEP domain; that stretch reads PEKGIKELNL…SPDAFYYFPD (86 aa). The 104-residue stretch at 244 to 347 folds into the PH 2 domain; that stretch reads VIIKQGCLLK…WIKAIQVASR (104 aa).

Functionally, major protein kinase C substrate of platelets. The chain is Pleckstrin (Plek) from Mus musculus (Mouse).